We begin with the raw amino-acid sequence, 84 residues long: MKLLYLFLAILLVIEEPVISGKRYILRCMGNSGICRASCKRNEQPYLYCKNYQSCCLQSYMRISISGKEENTDWSYEKQWPKLP.

The signal sequence occupies residues 1-21; the sequence is MKLLYLFLAILLVIEEPVISG. Disulfide bonds link cysteine 28/cysteine 55, cysteine 35/cysteine 49, and cysteine 39/cysteine 56.

It belongs to the beta-defensin family.

It localises to the secreted. Functionally, has antibacterial activity. In Pongo pygmaeus (Bornean orangutan), this protein is Beta-defensin 119 (DEFB119).